We begin with the raw amino-acid sequence, 720 residues long: UV-stimulated scaffold protein A (720 aa).

The segment at 2–145 (DQKLSQLIEE…HFLKHTKKVD (144 aa)) is VHS-like. A coiled-coil region spans residues 169–198 (KIHRESADRAKREMEEMSDEIGCCLTEVEN). Disordered stretches follow at residues 234 to 253 (PDLATPRGSGLSGPQDEEQP), 269 to 304 (AVGLKAPAPAATEDPCRDEDRHSEHSDPEDFLRSHG), and 392 to 415 (PGRGQRSRTEALEDSEEEDQDFVE). Residues 282 to 301 (DPCRDEDRHSEHSDPEDFLR) are compositionally biased toward basic and acidic residues. Ser294 and Ser406 each carry phosphoserine. Positions 403-415 (LEDSEEEDQDFVE) are enriched in acidic residues. Lys419 is covalently cross-linked (Glycyl lysine isopeptide (Lys-Gly) (interchain with G-Cter in ubiquitin)). Residues 451–507 (VCSVQERTRRRREEEASDPTSAAAQMLRLQDCLSSPSSSSTRGPLGPEEAQKQAERA) form a disordered region. The UVSSA-type zinc-finger motif lies at 574 to 601 (QHKCRALRPNGRLCERQDRLKCPFHGKI). Cys577, Cys587, Cys595, and His598 together coordinate Zn(2+). 2 disordered regions span residues 598–637 (HGKIIPRDDKGQPLNPEDRAREQRQQLQQQRAHPDWQDPE) and 649–669 (DLGSSKYSKKGKGKKKKHPNL). Residues 602–621 (IPRDDKGQPLNPEDRAREQR) are compositionally biased toward basic and acidic residues. Positions 655–667 (YSKKGKGKKKKHP) are enriched in basic residues.

Belongs to the UVSSA family. Interacts with the elongating form of RNA polymerase II (RNA pol IIo) during transcription stress. Interacts with the TFIIH complex during transcription stress. Interacts with ERCC6. Interacts with ERCC8. Interacts with USP7. In terms of processing, monoubiquitinated at Lys-419 in response to transcription stress; this promotes efficient transfer of TFIIH to stalled RNA polymerase II.

It localises to the chromosome. Factor involved in transcription-coupled nucleotide excision repair (TC-NER), a mechanism that rapidly removes RNA polymerase II-blocking lesions from the transcribed strand of active genes. Acts as a key adapter that promotes recruitment of factors involved in TC-NER. Facilitates the ubiquitination of the elongating form of RNA polymerase II (RNA pol IIo) at DNA damage sites, thereby promoting RNA pol IIo backtracking and access by the TC-NER machinery to lesion sites. Also promotes stabilization of ERCC6/CSB by recruiting deubiquitinating enzyme USP7 to TC-NER complexes, preventing UV-induced degradation of ERCC6 by the proteasome. Mediates the recruitment of the TFIIH complex and other factors that are required for nucleotide excision repair to RNA polymerase II. Also required to inactivate stalled RNA polymerase II by blocking the access of TCEA1/TFIIS, thereby preventing reactivation of RNA polymerase II. Not involved in processing oxidative damage. The sequence is that of UV-stimulated scaffold protein A (Uvssa) from Rattus norvegicus (Rat).